A 249-amino-acid chain; its full sequence is Isoprenyl transferase 1 (249 aa).

Aspartate 30 is an active-site residue. Mg(2+) is bound at residue aspartate 30. Residues glycine 31–arginine 34, tryptophan 35, arginine 43, histidine 47, and serine 75–glutamate 77 contribute to the substrate site. Asparagine 78 functions as the Proton acceptor in the catalytic mechanism. Substrate-binding positions include tryptophan 79, arginine 81, arginine 198, and arginine 204–serine 206. A Mg(2+)-binding site is contributed by glutamate 217.

Belongs to the UPP synthase family. Homodimer. Requires Mg(2+) as cofactor.

In terms of biological role, catalyzes the condensation of isopentenyl diphosphate (IPP) with allylic pyrophosphates generating different type of terpenoids. This Tropheryma whipplei (strain Twist) (Whipple's bacillus) protein is Isoprenyl transferase 1.